Consider the following 212-residue polypeptide: High frequency lysogenization protein HflD homolog (212 aa).

It belongs to the HflD family.

The protein localises to the cytoplasm. The protein resides in the cell inner membrane. The sequence is that of High frequency lysogenization protein HflD homolog from Pectobacterium carotovorum subsp. carotovorum (strain PC1).